A 506-amino-acid chain; its full sequence is Galactose/methyl galactoside import ATP-binding protein MglA (506 aa).

ABC transporter domains lie at 14-249 (LEMR…VGRS) and 259-506 (NKPG…SLHL). An ATP-binding site is contributed by 46–53 (GENGAGKS).

The protein belongs to the ABC transporter superfamily. Galactose/methyl galactoside importer (TC 3.A.1.2.3) family. The complex is composed of one ATP-binding protein (MglA), two transmembrane proteins (MglC) and a solute-binding protein (MglB).

The protein localises to the cell inner membrane. It carries out the reaction D-galactose(out) + ATP + H2O = D-galactose(in) + ADP + phosphate + H(+). The catalysed reaction is methyl beta-D-galactoside(out) + ATP + H2O = methyl beta-D-galactoside(in) + ADP + phosphate + H(+). With respect to regulation, stimulated 3-fold by galactose and inhibited by vanadate, N-ethylmaleimide, and 5-methoxyindole-2-carboxylic acid. Part of the ABC transporter complex MglABC involved in galactose/methyl galactoside import. Responsible for energy coupling to the transport system. In Salmonella typhimurium (strain LT2 / SGSC1412 / ATCC 700720), this protein is Galactose/methyl galactoside import ATP-binding protein MglA.